A 1052-amino-acid chain; its full sequence is Fibroblast growth factor receptor homolog 2 (1052 aa).

The first 19 residues, 1–19, serve as a signal peptide directing secretion; that stretch reads MAKVPITLVMIIAIVSAAA. Topologically, residues 20–600 are extracellular; that stretch reads DLGCDYGHHR…EIYALLHAHP (581 aa). 3 consecutive Ig-like C2-type domains span residues 23–117, 124–230, and 240–340; these read CDYG…IASF, PALP…PTQL, and PMLK…RTVA. An intrachain disulfide couples C30 to C90. N-linked (GlcNAc...) asparagine glycosylation is found at N99, N137, N175, N181, N249, and N257. The cysteines at positions 164 and 217 are disulfide-linked. A disulfide bridge links C262 with C329. Low complexity predominate over residues 358–372; the sequence is TTTTTVASPIPTAST. The interval 358 to 393 is disordered; sequence TTTTTVASPIPTASTGEDNDDDVENPAAEASGGVGP. 2 consecutive Ig-like C2-type domains span residues 393–478 and 487–585; these read PPVF…FSVQ and PIIV…RVVS. A disulfide bridge connects residues C416 and C462. Residues N423, N444, N494, N500, N526, N541, N546, N555, and N576 are each glycosylated (N-linked (GlcNAc...) asparagine). A disulfide bond links C507 and C566. The chain crosses the membrane as a helical span at residues 601-626; the sequence is LGFTLAAITIVALFLLGSAFITFMLR. Residues 627 to 1052 are Cytoplasmic-facing; sequence RLRREKLLKL…LRYQYTYKFN (426 aa). A Protein kinase domain is found at 712–1000; it reads LSLGSILGEG…ELVESFDGIL (289 aa). ATP-binding positions include 718-726 and K748; that span reads LGEGAFGRV. The active-site Proton acceptor is the D864. The residue at position 895 (Y895) is a Phosphotyrosine; by autocatalysis. The tract at residues 1017–1038 is disordered; the sequence is PMLETPPSSGDEDDGSDTETFR.

This sequence belongs to the protein kinase superfamily. Tyr protein kinase family. Fibroblast growth factor receptor subfamily. In terms of tissue distribution, during embryogenesis, expression is seen in mesoderm, endodermal precursor cells, CNS midline cells and trachea and salivary duct ectodermal cells.

The protein localises to the membrane. The catalysed reaction is L-tyrosyl-[protein] + ATP = O-phospho-L-tyrosyl-[protein] + ADP + H(+). Its function is as follows. May be required for patterning of muscle precursor cells: generation of mesodermal and endodermal layers, invaginations of various types of cells, and CNS formation. Essential for the ability of the migrating tracheal and midline cells to recognize external guiding cues. This Drosophila melanogaster (Fruit fly) protein is Fibroblast growth factor receptor homolog 2 (btl).